Reading from the N-terminus, the 229-residue chain is Uracil-DNA glycosylase (229 aa).

The active-site Proton acceptor is the Asp64.

Belongs to the uracil-DNA glycosylase (UDG) superfamily. UNG family.

It is found in the cytoplasm. It carries out the reaction Hydrolyzes single-stranded DNA or mismatched double-stranded DNA and polynucleotides, releasing free uracil.. Functionally, excises uracil residues from the DNA which can arise as a result of misincorporation of dUMP residues by DNA polymerase or due to deamination of cytosine. The chain is Uracil-DNA glycosylase from Escherichia fergusonii (strain ATCC 35469 / DSM 13698 / CCUG 18766 / IAM 14443 / JCM 21226 / LMG 7866 / NBRC 102419 / NCTC 12128 / CDC 0568-73).